The chain runs to 235 residues: Dephospho-CoA kinase (235 aa).

In terms of domain architecture, DPCK spans 15–219 (NVGLTGSISC…KKERLQRKSA (205 aa)). 23–28 (SCGKST) provides a ligand contact to ATP.

Belongs to the CoaE family.

It localises to the cytoplasm. It carries out the reaction 3'-dephospho-CoA + ATP = ADP + CoA + H(+). It functions in the pathway cofactor biosynthesis; coenzyme A biosynthesis; CoA from (R)-pantothenate: step 5/5. Its function is as follows. Catalyzes the phosphorylation of the 3'-hydroxyl group of dephosphocoenzyme A to form coenzyme A. This Syntrophus aciditrophicus (strain SB) protein is Dephospho-CoA kinase.